We begin with the raw amino-acid sequence, 214 residues long: Glycoprotein Q2 (214 aa).

The N-terminal stretch at 1-19 is a signal peptide; that stretch reads MHFLVVYILIHFHAYRGMA. Residues Asn-41, Asn-74, Asn-110, and Asn-210 are each glycosylated (N-linked (GlcNAc...) asparagine; by host).

In terms of assembly, interacts with isoform gQ1. The heterodimer gQ1-gQ2 associates with the glycoprotein complex gH-gL to form a tetrameric complex. The gH/gL/gQ1/gQ2 complex binds to human receptor CD46. Post-translationally, glycosylated by host.

It localises to the virion membrane. Its subcellular location is the host endoplasmic reticulum-Golgi intermediate compartment. Its function is as follows. Plays a role in virus entry by participating in host receptor binding at the cell surface. In Human herpesvirus 6A (strain Uganda-1102) (HHV-6 variant A), this protein is Glycoprotein Q2.